The sequence spans 500 residues: MLNVNFVNEESSTNQGLVVFIDEQLKLDSNLIGLDQQHHGLISKTIQNKLQFTGKYGQIKVIPSVIKSGEVRYLIIAGLGNEEKLTEAKIEELGGKILQHATGCKISTIGLKLTNRISRFTSQTFASLVASGAFLASYRFDKYRTTLKEAEKFAVESIEIFTDNSTETAKLFEIKKLIAEAVFFTRDISNEPSNIKTPQVYAERIVDRLEPLGVDVDVIGEREMKNLGMGALLGVGQGSQNESKLVVMEYKGGSKDAPTIALVGKGVIFDTGGISLKPSSDMHLMRYDMGGSAAVVGTIIAVAGQKLSVNIVGVVGLVENMPSGNAQRPGDVVTTMSGQTAEVLNTDAEGRLVLADAVWYAQEKFKPKCVIDVATLTGAITIALGNTYAGCFSNNDELADKLIKVGEEVNEKLWRMPLHDEYDAMINSDIADMANIGNVPRAAGSCIAAHFIKRFIKDGVDWAHLDIAGVANSNKASALGPKGAVGYGVRLLEQFIKEYT.

Mn(2+) contacts are provided by Lys-265 and Asp-270. Lys-277 is a catalytic residue. Mn(2+) is bound by residues Asp-288, Asp-347, and Glu-349. Residue Arg-351 is part of the active site.

Belongs to the peptidase M17 family. Mn(2+) serves as cofactor.

The protein resides in the cytoplasm. It catalyses the reaction Release of an N-terminal amino acid, Xaa-|-Yaa-, in which Xaa is preferably Leu, but may be other amino acids including Pro although not Arg or Lys, and Yaa may be Pro. Amino acid amides and methyl esters are also readily hydrolyzed, but rates on arylamides are exceedingly low.. It carries out the reaction Release of an N-terminal amino acid, preferentially leucine, but not glutamic or aspartic acids.. In terms of biological role, presumably involved in the processing and regular turnover of intracellular proteins. Catalyzes the removal of unsubstituted N-terminal amino acids from various peptides. The sequence is that of Probable cytosol aminopeptidase from Rickettsia peacockii (strain Rustic).